We begin with the raw amino-acid sequence, 200 residues long: Recombination protein RecR (200 aa).

The segment at 57–72 adopts a C4-type zinc-finger fold; the sequence is CRQCRTLTEDDLCPQC. The Toprim domain occupies 80 to 175; the sequence is TLLCVVEGPM…IASRIAHGVP (96 aa).

This sequence belongs to the RecR family.

May play a role in DNA repair. It seems to be involved in an RecBC-independent recombinational process of DNA repair. It may act with RecF and RecO. In Pseudomonas fluorescens (strain Pf0-1), this protein is Recombination protein RecR.